The sequence spans 2225 residues: Multifunctional protein CAD (2225 aa).

Ala2 carries the N-acetylalanine modification. A GATase (Glutamine amidotransferase) region spans residues 2–365 (AALVLEDGSV…TVREAAAGNI (364 aa)). 3 residues coordinate L-glutamine: Ser44, Gly222, and Gly224. In terms of domain architecture, Glutamine amidotransferase type-1 spans 177-363 (RICALDCGLK…LETVREAAAG (187 aa)). Catalysis depends on Cys252, which acts as the Nucleophile; for GATase activity. L-glutamine is bound by residues Leu253, Gln256, Asn294, Gly296, and Phe297. Residues His336 and Glu338 each act as for GATase activity in the active site. Residues 366–394 (GGQTVRERLAQRLCPPELPIPGSGLPPPR) are linker. The interval 395–933 (KVLILGSGGL…NTHDLDFRAP (539 aa)) is CPSase A. Residues 395–1455 (KVLILGSGGL…APPLKVHVDC (1061 aa)) are CPSase (Carbamoyl-phosphate synthase). A Phosphothreonine; by MAPK1 modification is found at Thr456. ATP contacts are provided by Arg515, Arg555, Gly561, Gly562, Lys592, Glu599, Gly625, Ile626, His627, Gln668, and Glu682. Positions 519 to 711 (AARMAEIGEH…LAYVAAKLAL (193 aa)) constitute an ATP-grasp 1 domain. 3 residues coordinate Mg(2+): Gln668, Glu682, and Asn684. Mn(2+) is bound by residues Gln668, Glu682, and Asn684. At Lys747 the chain carries N6-acetyllysine. Residues 934–1455 (HVLVLGSGVY…APPLKVHVDC (522 aa)) form a CPSase B region. Residue Ser1038 is modified to Phosphoserine. The ATP-grasp 2 domain occupies 1052-1243 (SRLLDTIGIS…LVALATRIIM (192 aa)). ATP-binding residues include Arg1088, Lys1127, Ile1129, Glu1134, Gly1159, Val1160, His1161, Ser1162, Gln1202, and Glu1214. 3 residues coordinate Mg(2+): Gln1202, Glu1214, and Asn1216. Positions 1202, 1214, and 1216 each coordinate Mn(2+). One can recognise an MGS-like domain in the interval 1308-1462 (FKIPEKNILL…VDCMTSQKLV (155 aa)). Position 1406 is a phosphoserine; by PKA (Ser1406). Lys1411 carries the post-translational modification N6-acetyllysine. Residues 1456–1788 (MTSQKLVRLP…VKGTVRRVVL (333 aa)) are DHOase (dihydroorotase). Zn(2+) is bound by residues His1471 and His1473. The (S)-dihydroorotate site is built by Arg1475 and Asn1505. The Zn(2+) site is built by Lys1556, His1590, Cys1613, His1614, and Glu1637. The residue at position 1556 (Lys1556) is an N6-carboxylysine. Arg1661 contacts (S)-dihydroorotate. Asp1686 lines the Zn(2+) pocket. Asp1686 functions as the For DHOase activity in the catalytic mechanism. Residues His1690 and Pro1702 each coordinate (S)-dihydroorotate. The linker stretch occupies residues 1789–1917 (RGEVAYIDGQ…GLLHPQMSPL (129 aa)). The interval 1815–1885 (GVVPQPPPST…VVEPELMGTP (71 aa)) is disordered. The segment covering 1825–1834 (PATTEITTTP) has biased composition (low complexity). The residue at position 1859 (Ser1859) is a Phosphoserine. The segment covering 1866-1878 (EEPKEKPPRKVVE) has biased composition (basic and acidic residues). Thr1884 is modified (phosphothreonine). Phosphoserine is present on residues Ser1900 and Ser1938. Positions 1918-2225 (LHSLVGQHIL…ALLATVLGRF (308 aa)) are ATCase (Aspartate transcarbamylase). Residues Arg1975 and Thr1976 each contribute to the carbamoyl phosphate site. Lys2003 lines the L-aspartate pocket. Carbamoyl phosphate-binding residues include Arg2024, His2052, and Gln2055. L-aspartate is bound by residues Arg2085 and Arg2146. Residues Met2185 and Pro2186 each contribute to the carbamoyl phosphate site.

This sequence in the N-terminal section; belongs to the CarA family. It in the 2nd section; belongs to the CarB family. In the 3rd section; belongs to the metallo-dependent hydrolases superfamily. DHOase family. CAD subfamily. The protein in the C-terminal section; belongs to the aspartate/ornithine carbamoyltransferase superfamily. ATCase family. In terms of assembly, homohexamer. Interacts with CIPC. It depends on Zn(2+) as a cofactor. Mg(2+) serves as cofactor. Mn(2+) is required as a cofactor. In terms of processing, activated by MAP kinase (Erk1/2) phosphorylation just prior to the S phase of the cell cycle, when the demand for pyrimidine nucleotides is greatest, and down-regulated as the cells emerge from S phase by protein kinase A (PKA) phosphorylation. Phosphorylation at Ser-1859 by RPS6KB1 downstream of MTOR promotes oligomerization and stimulates dihydroorotase activity. Phosphorylation at Ser-1406 reduces sensitivity to feedback inhibition by UTP.

The protein resides in the cytoplasm. The protein localises to the nucleus. The enzyme catalyses hydrogencarbonate + L-glutamine + 2 ATP + H2O = carbamoyl phosphate + L-glutamate + 2 ADP + phosphate + 2 H(+). It carries out the reaction L-glutamine + H2O = L-glutamate + NH4(+). The catalysed reaction is hydrogencarbonate + NH4(+) + 2 ATP = carbamoyl phosphate + 2 ADP + phosphate + 2 H(+). It catalyses the reaction carbamoyl phosphate + L-aspartate = N-carbamoyl-L-aspartate + phosphate + H(+). The enzyme catalyses (S)-dihydroorotate + H2O = N-carbamoyl-L-aspartate + H(+). Its pathway is pyrimidine metabolism; UMP biosynthesis via de novo pathway; (S)-dihydroorotate from bicarbonate: step 1/3. It functions in the pathway pyrimidine metabolism; UMP biosynthesis via de novo pathway; (S)-dihydroorotate from bicarbonate: step 2/3. It participates in pyrimidine metabolism; UMP biosynthesis via de novo pathway; (S)-dihydroorotate from bicarbonate: step 3/3. Its activity is regulated as follows. Allosterically regulated and controlled by phosphorylation. 5-phosphoribose 1-diphosphate (PRPP) is an activator while UMP and UTP are inhibitors of the CPSase reaction. Its function is as follows. Multifunctional protein that encodes the first 3 enzymatic activities of the de novo pyrimidine pathway: carbamoylphosphate synthetase (CPSase; EC 6.3.5.5), aspartate transcarbamylase (ATCase; EC 2.1.3.2) and dihydroorotase (DHOase; EC 3.5.2.3). The CPSase-function is accomplished in 2 steps, by a glutamine-dependent amidotransferase activity (GATase) that binds and cleaves glutamine to produce ammonia, followed by an ammonium-dependent carbamoyl phosphate synthetase, which reacts with the ammonia, hydrogencarbonate and ATP to form carbamoyl phosphate. The endogenously produced carbamoyl phosphate is sequestered and channeled to the ATCase active site. ATCase then catalyzes the formation of carbamoyl-L-aspartate from L-aspartate and carbamoyl phosphate. In the last step, DHOase catalyzes the cyclization of carbamoyl aspartate to dihydroorotate. This is Multifunctional protein CAD (Cad) from Mus musculus (Mouse).